The primary structure comprises 555 residues: Glypican-6 (555 aa).

The N-terminal stretch at 1–23 (MPSWIGAVILPLLGLLLSLPAGA) is a signal peptide. Residues 348 to 357 (PALRSARSAP) are compositionally biased toward low complexity. Disordered stretches follow at residues 348–376 (PALR…PTTA) and 480–501 (GNDV…GSGC). S529 carries the GPI-anchor amidated serine lipid modification. A propeptide spans 530 to 555 (SAAQRGHSLLSWSLTCIVLALQRLCR) (removed in mature form).

This sequence belongs to the glypican family. In terms of tissue distribution, widely expressed. High expression in fetal kidney and lung and lower expressions in fetal liver and brain. In adult tissues, very abundant in ovary, high levels also observed in liver, kidney, small intestine and colon. Not detected in peripheral blood leukocytes. Detected in breast cancer cells (at protein level).

Its subcellular location is the cell membrane. It localises to the secreted. The protein localises to the extracellular space. In terms of biological role, cell surface proteoglycan that bears heparan sulfate. Putative cell surface coreceptor for growth factors, extracellular matrix proteins, proteases and anti-proteases. Enhances migration and invasion of cancer cells through WNT5A signaling. This Homo sapiens (Human) protein is Glypican-6 (GPC6).